Consider the following 862-residue polypeptide: Kinesin-like protein KIN-7E (862 aa).

The Kinesin motor domain occupies 24–346 (KILVLVRLRP…LLFACCAKEV (323 aa)). 110-117 (GQTSSGKT) provides a ligand contact to ATP. Residues 355 to 428 (VMSDKALVKQ…RLEDFMKMVE (74 aa)) are a coiled coil. 2 disordered regions span residues 463–505 (RTSF…QSEE) and 542–632 (ANGE…TPLV). Residues 465–476 (SFISDGTSTPLS) show a composition bias toward polar residues. Basic and acidic residues predominate over residues 494 to 505 (MSPRHSGDQSEE). The span at 612 to 621 (DSMTSRGSDS) shows a compositional bias: polar residues. Residue K734 forms a Glycyl lysine isopeptide (Lys-Gly) (interchain with G-Cter in ubiquitin) linkage.

Belongs to the TRAFAC class myosin-kinesin ATPase superfamily. Kinesin family. KIN-7 subfamily.

The protein is Kinesin-like protein KIN-7E of Arabidopsis thaliana (Mouse-ear cress).